The chain runs to 311 residues: HPr kinase/phosphorylase (311 aa).

Residues H138 and K159 contribute to the active site. 153–160 (GDSGIGKS) contacts ATP. S160 lines the Mg(2+) pocket. D177 (proton acceptor; for phosphorylation activity. Proton donor; for dephosphorylation activity) is an active-site residue. The interval 201 to 210 (LEIRGVGIID) is important for the catalytic mechanism of both phosphorylation and dephosphorylation. E202 provides a ligand contact to Mg(2+). The active site involves R243. The important for the catalytic mechanism of dephosphorylation stretch occupies residues 264 to 269 (PVKTGR).

Belongs to the HPrK/P family. As to quaternary structure, homohexamer. It depends on Mg(2+) as a cofactor.

The catalysed reaction is [HPr protein]-L-serine + ATP = [HPr protein]-O-phospho-L-serine + ADP + H(+). The enzyme catalyses [HPr protein]-O-phospho-L-serine + phosphate + H(+) = [HPr protein]-L-serine + diphosphate. Catalyzes the ATP- as well as the pyrophosphate-dependent phosphorylation of a specific serine residue in HPr, a phosphocarrier protein of the phosphoenolpyruvate-dependent sugar phosphotransferase system (PTS). HprK/P also catalyzes the pyrophosphate-producing, inorganic phosphate-dependent dephosphorylation (phosphorolysis) of seryl-phosphorylated HPr (P-Ser-HPr). The two antagonistic activities of HprK/P are regulated by several intracellular metabolites, which change their concentration in response to the absence or presence of rapidly metabolisable carbon sources (glucose, fructose, etc.) in the growth medium. Therefore, by controlling the phosphorylation state of HPr, HPrK/P is a sensor enzyme that plays a major role in the regulation of carbon metabolism and sugar transport: it mediates carbon catabolite repression (CCR), and regulates PTS-catalyzed carbohydrate uptake and inducer exclusion. The polypeptide is HPr kinase/phosphorylase (Streptococcus gordonii (strain Challis / ATCC 35105 / BCRC 15272 / CH1 / DL1 / V288)).